We begin with the raw amino-acid sequence, 294 residues long: 4-hydroxy-tetrahydrodipicolinate synthase (294 aa).

Thr46 contributes to the pyruvate binding site. Catalysis depends on Tyr134, which acts as the Proton donor/acceptor. Catalysis depends on Lys163, which acts as the Schiff-base intermediate with substrate. Ile205 contacts pyruvate.

Belongs to the DapA family. In terms of assembly, homotetramer; dimer of dimers.

Its subcellular location is the cytoplasm. It carries out the reaction L-aspartate 4-semialdehyde + pyruvate = (2S,4S)-4-hydroxy-2,3,4,5-tetrahydrodipicolinate + H2O + H(+). It participates in amino-acid biosynthesis; L-lysine biosynthesis via DAP pathway; (S)-tetrahydrodipicolinate from L-aspartate: step 3/4. Catalyzes the condensation of (S)-aspartate-beta-semialdehyde [(S)-ASA] and pyruvate to 4-hydroxy-tetrahydrodipicolinate (HTPA). This is 4-hydroxy-tetrahydrodipicolinate synthase from Clostridium tetani (strain Massachusetts / E88).